The sequence spans 488 residues: Multidrug resistance outer membrane protein MdtP (488 aa).

Residues Met1–Gly23 form the signal peptide. Cys24 carries N-palmitoyl cysteine lipidation. Cys24 is lipidated: S-diacylglycerol cysteine.

This sequence belongs to the outer membrane factor (OMF) (TC 1.B.17) family. As to quaternary structure, could be part of a tripartite efflux system composed of MdtN, MdtO and MdtP.

The protein resides in the cell outer membrane. Could be involved in resistance to puromycin, acriflavine and tetraphenylarsonium chloride. This Escherichia coli O157:H7 protein is Multidrug resistance outer membrane protein MdtP (mdtP).